The chain runs to 352 residues: MMLEINVKKRLGQLVLNARLTIPGQGITGIFGISGSGKSSLINLVSGLIHPDEGNIRLNDRTLIDTANNICLAPNQRNIGYVFQDARLFPHYSVKGNLCYGIKRFNQQEFNRIVRLLGIEHLLARYPLTLSGGEKQRVAIGRALLSNPEMLLMDEPLSALDLPRKRELLAYLEKLSQEINIPILYVTHSLDELFRLADFVVLLDEGKVAAFDSLENLWQSPLFEPWQEQGQKSAVLSLPILNHNFSYKMTALLLGEQQLWVKLLNGDEGKTVRICIRSTDVSITLTVPEKTSIRNILSGKIITLLPKGNQVDVKIALGKDEIWASVSTWAAEELQLQIGQSVYAQIKAVSVM.

The 229-residue stretch at Met-2–Gly-230 folds into the ABC transporter domain. Residue Gly-32 to Ser-39 coordinates ATP. Residues Lys-290 to Met-352 form the Mop domain.

This sequence belongs to the ABC transporter superfamily. Molybdate importer (TC 3.A.1.8) family. As to quaternary structure, the complex is composed of two ATP-binding proteins (ModC), two transmembrane proteins (ModB) and a solute-binding protein (ModA).

The protein localises to the cell inner membrane. The enzyme catalyses molybdate(out) + ATP + H2O = molybdate(in) + ADP + phosphate + H(+). Its function is as follows. Part of the ABC transporter complex ModABC involved in molybdenum import. Responsible for energy coupling to the transport system. This Mannheimia succiniciproducens (strain KCTC 0769BP / MBEL55E) protein is Molybdenum import ATP-binding protein ModC.